The chain runs to 164 residues: Lectin (164 aa).

The signal sequence occupies residues 1 to 15 (TVATILTILASTCMA). The 110-residue stretch at 16 to 125 (RNVLVNNEGL…DIWSTGTYRK (110 aa)) folds into the Bulb-type lectin domain. Cysteines 44 and 68 form a disulfide.

Homotetramer. In terms of processing, not glycosylated.

Its function is as follows. Mannose-specific lectin. Induces a Th1-type immune response in vitro. Causes a 4-fold increase in the proliferation of murine thymocytes and a significant increase in the production of nitric oxide at 24 hours in a macrophage cell line. Stimulates the production of the pro-inflammatory cytokines TNF and IL12 by rat peritoneal macrophages in a dose-dependent manner and of the cytokines IFNG and IL2 in murine thymocytes. Has hemagglutination activity towards rabbit erythrocytes. This Allium cepa (Onion) protein is Lectin.